A 271-amino-acid chain; its full sequence is Bifunctional protein FolD (271 aa).

Residues 154 to 156 (GRS), S181, and I222 contribute to the NADP(+) site.

Belongs to the tetrahydrofolate dehydrogenase/cyclohydrolase family. As to quaternary structure, homodimer.

The enzyme catalyses (6R)-5,10-methylene-5,6,7,8-tetrahydrofolate + NADP(+) = (6R)-5,10-methenyltetrahydrofolate + NADPH. It carries out the reaction (6R)-5,10-methenyltetrahydrofolate + H2O = (6R)-10-formyltetrahydrofolate + H(+). It functions in the pathway one-carbon metabolism; tetrahydrofolate interconversion. Functionally, catalyzes the oxidation of 5,10-methylenetetrahydrofolate to 5,10-methenyltetrahydrofolate and then the hydrolysis of 5,10-methenyltetrahydrofolate to 10-formyltetrahydrofolate. This is Bifunctional protein FolD from Thermotoga petrophila (strain ATCC BAA-488 / DSM 13995 / JCM 10881 / RKU-1).